Here is a 645-residue protein sequence, read N- to C-terminus: 1-deoxy-D-xylulose-5-phosphate synthase 2 (645 aa).

Thiamine diphosphate-binding positions include His-79 and 120 to 122; that span reads GHS. Residue Asp-151 participates in Mg(2+) binding. Thiamine diphosphate-binding positions include 152 to 153, Asn-180, Tyr-291, and Glu-373; that span reads GS. Asn-180 lines the Mg(2+) pocket.

The protein belongs to the transketolase family. DXPS subfamily. As to quaternary structure, homodimer. It depends on Mg(2+) as a cofactor. Thiamine diphosphate is required as a cofactor.

It catalyses the reaction D-glyceraldehyde 3-phosphate + pyruvate + H(+) = 1-deoxy-D-xylulose 5-phosphate + CO2. Its pathway is metabolic intermediate biosynthesis; 1-deoxy-D-xylulose 5-phosphate biosynthesis; 1-deoxy-D-xylulose 5-phosphate from D-glyceraldehyde 3-phosphate and pyruvate: step 1/1. Its function is as follows. Catalyzes the acyloin condensation reaction between C atoms 2 and 3 of pyruvate and glyceraldehyde 3-phosphate to yield 1-deoxy-D-xylulose-5-phosphate (DXP). The protein is 1-deoxy-D-xylulose-5-phosphate synthase 2 of Rhodospirillum rubrum (strain ATCC 11170 / ATH 1.1.1 / DSM 467 / LMG 4362 / NCIMB 8255 / S1).